A 229-amino-acid chain; its full sequence is Peptidase E (229 aa).

Active-site charge relay system residues include Ser-120, Asp-135, and His-157.

This sequence belongs to the peptidase S51 family.

It localises to the cytoplasm. It catalyses the reaction Dipeptidase E catalyzes the hydrolysis of dipeptides Asp-|-Xaa. It does not act on peptides with N-terminal Glu, Asn or Gln, nor does it cleave isoaspartyl peptides.. Its function is as follows. Hydrolyzes dipeptides containing N-terminal aspartate residues. May play a role in allowing the cell to use peptide aspartate to spare carbon otherwise required for the synthesis of the aspartate family of amino acids. The sequence is that of Peptidase E from Shigella sonnei (strain Ss046).